The following is a 779-amino-acid chain: Neutral ceramidase 1 (779 aa).

The active-site Nucleophile is S350. 3 N-linked (GlcNAc...) asparagine glycosylation sites follow: N368, N432, and N667.

Belongs to the neutral ceramidase family. In terms of tissue distribution, mostly expressed in stems, leaves, roots and siliques, and, to a lower extent, in flowers.

It is found in the secreted. The protein localises to the endoplasmic reticulum. The protein resides in the golgi apparatus. It catalyses the reaction an N-acylsphing-4-enine + H2O = sphing-4-enine + a fatty acid. In terms of biological role, hydrolyzes the sphingolipid ceramide into sphingosine and free fatty acid. Regulates sphingolipid homeostasis. Promotes oxidative stress resistance. The polypeptide is Neutral ceramidase 1 (Arabidopsis thaliana (Mouse-ear cress)).